We begin with the raw amino-acid sequence, 1790 residues long: Intracellular protein transport protein USO1 (1790 aa).

The segment at Met1–Ile724 is globular head. ARM repeat units lie at residues Ala45 to Arg89, Gln127 to Ala170, Pro173 to Val213, Asp215 to Lys260, Tyr261 to Thr312, Glu314 to Arg362, Ser363 to Tyr429, Met431 to Leu512, Gly543 to Trp584, and Phe586 to Ala630. The segment at Thr452–Thr484 is disordered. The segment at Ser465 to Glu487 is charged (hyper-hydrophilic). Residues Lys467–Thr484 show a composition bias toward basic and acidic residues. Residues Asn725–Ala1790 are a coiled coil. Residues Glu991–Ala1790 form a dispensable for the protein function region. 6 disordered regions span residues Glu1185–Lys1221, Lys1326–Leu1351, Gly1485–Lys1547, Gln1645–Lys1667, Asp1722–Asp1742, and Leu1762–Ala1790. Positions Glu1194–Ala1209 are enriched in basic and acidic residues. Composition is skewed to basic and acidic residues over residues Gly1485–Ser1512, Thr1519–Lys1547, Gln1655–Lys1667, and Asp1722–Arg1738. Position 1770 is a phosphoserine (Ser1770). The span at Ser1770 to Ala1790 shows a compositional bias: acidic residues.

This sequence belongs to the VDP/USO1/EDE1 family. As to quaternary structure, homodimer. Dimerizes by parallel association of the tails, resulting in an elongated structure with two globular head domains side by side, and a long rod-like tail structure.

The protein resides in the cytoplasm. The protein localises to the cytoskeleton. Its subcellular location is the cytoplasmic vesicle membrane. It is found in the endoplasmic reticulum membrane. It localises to the golgi apparatus membrane. Functionally, required for protein transport from the ER to the Golgi complex. The sequence is that of Intracellular protein transport protein USO1 (USO1) from Saccharomyces cerevisiae (strain ATCC 204508 / S288c) (Baker's yeast).